Reading from the N-terminus, the 137-residue chain is Hemoglobin subunit alpha-2 (137 aa).

The Globin domain occupies 1–137 (DDRSHILAIW…VGGSLTSKYR (137 aa)). Position 54 (His-54) interacts with O2. Position 83 (His-83) interacts with heme b.

Belongs to the globin family. In terms of processing, the N-terminus of the mature protein is acetylated. Red blood cells.

This chain is Hemoglobin subunit alpha-2, found in Telmatobius peruvianus (Andean frog).